The primary structure comprises 179 residues: Gamma-glutamyl cyclotransferase verK (179 aa).

The protein belongs to the class-I pyridoxal-phosphate-dependent aminotransferase family.

The enzyme catalyses an alpha-(gamma-L-glutamyl)-L-amino acid = 5-oxo-L-proline + an L-alpha-amino acid. It functions in the pathway mycotoxin biosynthesis. Gamma-glutamyl cyclotransferase; part of the gene cluster that mediates the biosynthesis of 11'-deoxyverticillin A, one of the dimeric epipolythiodioxopiperazines (ETPs) from the verticillin family that act as mycotoxins. 11'-deoxyverticillin A is required for normal conidiation. The nonribosomal peptide synthetase verP is speculated to be responsible for condensation of amino acids to form the carbon skeleton of verticillin, whereas the cluster-specific tailoring enzymes are involved in further modifications leading to the production of 11'-deoxyverticillin A. The protein is Gamma-glutamyl cyclotransferase verK of Clonostachys rogersoniana.